The primary structure comprises 92 residues: Small ribosomal subunit protein uS19 (92 aa).

This sequence belongs to the universal ribosomal protein uS19 family.

In terms of biological role, protein S19 forms a complex with S13 that binds strongly to the 16S ribosomal RNA. The protein is Small ribosomal subunit protein uS19 of Bradyrhizobium diazoefficiens (strain JCM 10833 / BCRC 13528 / IAM 13628 / NBRC 14792 / USDA 110).